The sequence spans 136 residues: NHL-repeat-containing protein 4 (136 aa).

NHL repeat units lie at residues 48 to 91 (QPLG…FPRV) and 93 to 132 (PPIC…YQYL).

In Mus musculus (Mouse), this protein is NHL-repeat-containing protein 4 (Nhlrc4).